Here is a 702-residue protein sequence, read N- to C-terminus: Elongation factor G (702 aa).

The tr-type G domain maps to 8–290; sequence ERYRNIGISA…AVIDYLPSPV (283 aa). Residues 17–24, 88–92, and 142–145 contribute to the GTP site; these read AHIDAGKT, DTPGH, and NKMD.

It belongs to the TRAFAC class translation factor GTPase superfamily. Classic translation factor GTPase family. EF-G/EF-2 subfamily.

It localises to the cytoplasm. Its function is as follows. Catalyzes the GTP-dependent ribosomal translocation step during translation elongation. During this step, the ribosome changes from the pre-translocational (PRE) to the post-translocational (POST) state as the newly formed A-site-bound peptidyl-tRNA and P-site-bound deacylated tRNA move to the P and E sites, respectively. Catalyzes the coordinated movement of the two tRNA molecules, the mRNA and conformational changes in the ribosome. This is Elongation factor G from Acidovorax ebreus (strain TPSY) (Diaphorobacter sp. (strain TPSY)).